The following is a 294-amino-acid chain: Bifunctional protein FolD (294 aa).

Residues glycine 175 to serine 177 and isoleucine 243 each bind NADP(+).

It belongs to the tetrahydrofolate dehydrogenase/cyclohydrolase family. As to quaternary structure, homodimer.

It carries out the reaction (6R)-5,10-methylene-5,6,7,8-tetrahydrofolate + NADP(+) = (6R)-5,10-methenyltetrahydrofolate + NADPH. The catalysed reaction is (6R)-5,10-methenyltetrahydrofolate + H2O = (6R)-10-formyltetrahydrofolate + H(+). It participates in one-carbon metabolism; tetrahydrofolate interconversion. Its function is as follows. Catalyzes the oxidation of 5,10-methylenetetrahydrofolate to 5,10-methenyltetrahydrofolate and then the hydrolysis of 5,10-methenyltetrahydrofolate to 10-formyltetrahydrofolate. This Xanthomonas campestris pv. campestris (strain 8004) protein is Bifunctional protein FolD.